A 382-amino-acid polypeptide reads, in one-letter code: 1-deoxy-D-xylulose 5-phosphate reductoisomerase (382 aa).

Positions 10, 11, 12, 13, 38, and 120 each coordinate NADPH. K121 lines the 1-deoxy-D-xylulose 5-phosphate pocket. E122 contributes to the NADPH binding site. Mn(2+) is bound at residue D146. 1-deoxy-D-xylulose 5-phosphate-binding residues include S147, E148, S172, and H195. E148 is a Mn(2+) binding site. G201 is an NADPH binding site. 1-deoxy-D-xylulose 5-phosphate is bound by residues S208, N213, K214, and E217. E217 contributes to the Mn(2+) binding site.

Belongs to the DXR family. Mg(2+) is required as a cofactor. Mn(2+) serves as cofactor.

It catalyses the reaction 2-C-methyl-D-erythritol 4-phosphate + NADP(+) = 1-deoxy-D-xylulose 5-phosphate + NADPH + H(+). Its pathway is isoprenoid biosynthesis; isopentenyl diphosphate biosynthesis via DXP pathway; isopentenyl diphosphate from 1-deoxy-D-xylulose 5-phosphate: step 1/6. Its function is as follows. Catalyzes the NADPH-dependent rearrangement and reduction of 1-deoxy-D-xylulose-5-phosphate (DXP) to 2-C-methyl-D-erythritol 4-phosphate (MEP). The protein is 1-deoxy-D-xylulose 5-phosphate reductoisomerase of Caldanaerobacter subterraneus subsp. tengcongensis (strain DSM 15242 / JCM 11007 / NBRC 100824 / MB4) (Thermoanaerobacter tengcongensis).